The primary structure comprises 683 residues: Transforming growth factor-beta-induced protein ig-h3 (683 aa).

Residues 1 to 23 (MALLGRLLPLALALALGPAATHA) form the signal peptide. Position 37 is a phosphoserine (serine 37). Residues 45–99 (GPNVCAVQKLIGTNKKYFTNCKQWYQRKICGKSTVISYECCPGYEKVPGEKGCPA) enclose the EMI domain. Disulfide bonds link cysteine 49–cysteine 85, cysteine 74–cysteine 339, cysteine 84–cysteine 97, cysteine 214–cysteine 317, and cysteine 473–cysteine 478. Cysteine 65 bears the S-cysteinyl cysteine mark. FAS1 domains lie at 103–236 (LSNL…DKVI), 240–371 (TNNI…DELL), 375–498 (SAKT…DRML), and 502–632 (MGTV…NTVL). Residues 642–644 (RGD) carry the Cell attachment site motif.

As to quaternary structure, binds to type I, II, and IV collagens. Post-translationally, gamma-carboxyglutamated; gamma-carboxyglutamate residues are formed by vitamin K dependent carboxylation; these residues may be required for binding to calcium. According to a report, does not contain any vitamin K-dependent gamma-carboxyglutamate residues. In terms of processing, the EMI domain contains 2 expected intradomain disulfide bridges (Cys-49-Cys85 and Cys-84-Cys-97) and one unusual interdomain disulfide bridge to the second FAS1 domain (Cys-74-Cys-339). This arrangement violates the predicted disulfide bridge pattern of an EMI domain. In terms of tissue distribution, widely distributed in various tissues except for the brain. High levels in corneal epithelium.

Its subcellular location is the secreted. It localises to the extracellular space. It is found in the extracellular matrix. Functionally, plays a role in cell adhesion. May play a role in cell-collagen interactions. The chain is Transforming growth factor-beta-induced protein ig-h3 (TGFBI) from Sus scrofa (Pig).